The primary structure comprises 361 residues: Chorismate synthase (361 aa).

Residues 40 to 49 (DLQHDLDRRR) are compositionally biased toward basic and acidic residues. The tract at residues 40 to 60 (DLQHDLDRRRPGTSRHTTQRR) is disordered. The NADP(+) site is built by arginine 48 and arginine 54. FMN contacts are provided by residues 125 to 127 (RSS), 237 to 238 (NA), glycine 277, 292 to 296 (KPTSS), and arginine 318.

The protein belongs to the chorismate synthase family. As to quaternary structure, homotetramer. FMNH2 serves as cofactor.

It catalyses the reaction 5-O-(1-carboxyvinyl)-3-phosphoshikimate = chorismate + phosphate. The protein operates within metabolic intermediate biosynthesis; chorismate biosynthesis; chorismate from D-erythrose 4-phosphate and phosphoenolpyruvate: step 7/7. Its function is as follows. Catalyzes the anti-1,4-elimination of the C-3 phosphate and the C-6 proR hydrogen from 5-enolpyruvylshikimate-3-phosphate (EPSP) to yield chorismate, which is the branch point compound that serves as the starting substrate for the three terminal pathways of aromatic amino acid biosynthesis. This reaction introduces a second double bond into the aromatic ring system. This is Chorismate synthase from Chromohalobacter salexigens (strain ATCC BAA-138 / DSM 3043 / CIP 106854 / NCIMB 13768 / 1H11).